Here is a 343-residue protein sequence, read N- to C-terminus: MSTALIDVDSMEPSLQSILDQKSLRWIFVGGKGGVGKTTTSCSLAIQLAKVRRSVLLISTDPAHNLSDAFSQKFGKEARLIDGFTNLSAMEIDPNGSMQDLLAGQGADEGGAAADGMAGMGGMMQDLAFAIPGIDEAMSFAEVLKQVKSLSYETIIFDTAPTGHTLRFLQFPSVLEKALAKVSQLSSQYGPLLNGFLGGQGQLPNGQSLPEMMEKLEQLRETISEVNTQFKDENLTTFVCVCIAEFLSLYETERMIQELASYNIDTHCIVVNQLLFPKKGSKCDHCDARRRMQKKYLDQIEELYDEFNVVKMPMLIEEVRGKEKLEKFSEMLVKPYVPPEADE.

32-39 serves as a coordination point for ATP; that stretch reads KGGVGKTT. Residue Asp61 is part of the active site. 2 residues coordinate ATP: Glu245 and Asn272. Zn(2+) is bound by residues Cys283 and Cys286.

It belongs to the arsA ATPase family. In terms of assembly, homodimer.

It localises to the cytoplasm. The protein resides in the endoplasmic reticulum. ATPase required for the post-translational delivery of tail-anchored (TA) proteins to the endoplasmic reticulum. Recognizes and selectively binds the transmembrane domain of TA proteins in the cytosol. This complex then targets to the endoplasmic reticulum by membrane-bound receptors, where the tail-anchored protein is released for insertion. This process is regulated by ATP binding and hydrolysis. ATP binding drives the homodimer towards the closed dimer state, facilitating recognition of newly synthesized TA membrane proteins. ATP hydrolysis is required for insertion. Subsequently, the homodimer reverts towards the open dimer state, lowering its affinity for the membrane-bound receptor, and returning it to the cytosol to initiate a new round of targeting. The sequence is that of ATPase GET3 from Pyricularia oryzae (strain 70-15 / ATCC MYA-4617 / FGSC 8958) (Rice blast fungus).